Here is a 647-residue protein sequence, read N- to C-terminus: Threonine--tRNA ligase (647 aa).

The 61-residue stretch at 1-61 (MINITFPDGA…TEDGSIEIVT (61 aa)) folds into the TGS domain. The tract at residues 242 to 540 (DHRKLGKELD…LIENYKGAFP (299 aa)) is catalytic. Positions 336, 387, and 517 each coordinate Zn(2+).

Belongs to the class-II aminoacyl-tRNA synthetase family. Homodimer. Zn(2+) is required as a cofactor.

It is found in the cytoplasm. The enzyme catalyses tRNA(Thr) + L-threonine + ATP = L-threonyl-tRNA(Thr) + AMP + diphosphate + H(+). Its function is as follows. Catalyzes the attachment of threonine to tRNA(Thr) in a two-step reaction: L-threonine is first activated by ATP to form Thr-AMP and then transferred to the acceptor end of tRNA(Thr). Also edits incorrectly charged L-seryl-tRNA(Thr). The polypeptide is Threonine--tRNA ligase (Streptococcus pneumoniae serotype 19F (strain G54)).